The primary structure comprises 206 residues: Small ribosomal subunit protein uS4 (206 aa).

Positions 96–156 (TRLDNVVYRM…EKSRTQARIK (61 aa)) constitute an S4 RNA-binding domain.

This sequence belongs to the universal ribosomal protein uS4 family. In terms of assembly, part of the 30S ribosomal subunit. Contacts protein S5. The interaction surface between S4 and S5 is involved in control of translational fidelity.

In terms of biological role, one of the primary rRNA binding proteins, it binds directly to 16S rRNA where it nucleates assembly of the body of the 30S subunit. Functionally, with S5 and S12 plays an important role in translational accuracy. In Shewanella sp. (strain ANA-3), this protein is Small ribosomal subunit protein uS4.